The following is a 399-amino-acid chain: Dual-specificity RNA methyltransferase RlmN (399 aa).

Glutamate 122 (proton acceptor) is an active-site residue. The region spanning 128–371 (ETDRGTLCVS…VRTPRGRDIL (244 aa)) is the Radical SAM core domain. Cysteine 135 and cysteine 374 form a disulfide bridge. Residues cysteine 142, cysteine 146, and cysteine 149 each contribute to the [4Fe-4S] cluster site. Residues 200 to 201 (GE), serine 232, 254 to 256 (SLH), and asparagine 331 contribute to the S-adenosyl-L-methionine site. Cysteine 374 acts as the S-methylcysteine intermediate in catalysis.

The protein belongs to the radical SAM superfamily. RlmN family. It depends on [4Fe-4S] cluster as a cofactor.

It localises to the cytoplasm. The catalysed reaction is adenosine(2503) in 23S rRNA + 2 reduced [2Fe-2S]-[ferredoxin] + 2 S-adenosyl-L-methionine = 2-methyladenosine(2503) in 23S rRNA + 5'-deoxyadenosine + L-methionine + 2 oxidized [2Fe-2S]-[ferredoxin] + S-adenosyl-L-homocysteine. The enzyme catalyses adenosine(37) in tRNA + 2 reduced [2Fe-2S]-[ferredoxin] + 2 S-adenosyl-L-methionine = 2-methyladenosine(37) in tRNA + 5'-deoxyadenosine + L-methionine + 2 oxidized [2Fe-2S]-[ferredoxin] + S-adenosyl-L-homocysteine. Its function is as follows. Specifically methylates position 2 of adenine 2503 in 23S rRNA and position 2 of adenine 37 in tRNAs. m2A2503 modification seems to play a crucial role in the proofreading step occurring at the peptidyl transferase center and thus would serve to optimize ribosomal fidelity. This chain is Dual-specificity RNA methyltransferase RlmN, found in Rhodopseudomonas palustris (strain TIE-1).